Reading from the N-terminus, the 381-residue chain is Acetylornithine deacetylase (381 aa).

His-79 serves as a coordination point for Zn(2+). Asp-81 is a catalytic residue. Asp-111 is a Zn(2+) binding site. The active site involves Glu-143. Positions 144, 168, and 354 each coordinate Zn(2+).

This sequence belongs to the peptidase M20A family. ArgE subfamily. As to quaternary structure, homodimer. Zn(2+) is required as a cofactor. Co(2+) serves as cofactor. The cofactor is glutathione.

Its subcellular location is the cytoplasm. It catalyses the reaction N(2)-acetyl-L-ornithine + H2O = L-ornithine + acetate. It participates in amino-acid biosynthesis; L-arginine biosynthesis; L-ornithine from N(2)-acetyl-L-ornithine (linear): step 1/1. In terms of biological role, catalyzes the hydrolysis of the amide bond of N(2)-acetylated L-amino acids. Cleaves the acetyl group from N-acetyl-L-ornithine to form L-ornithine, an intermediate in L-arginine biosynthesis pathway, and a branchpoint in the synthesis of polyamines. This chain is Acetylornithine deacetylase, found in Buchnera aphidicola subsp. Acyrthosiphon pisum (strain 5A).